The following is a 324-amino-acid chain: Glyoxylate/hydroxypyruvate reductase B (324 aa).

Active-site residues include R237 and E266. H285 acts as the Proton donor in catalysis.

This sequence belongs to the D-isomer specific 2-hydroxyacid dehydrogenase family. GhrB subfamily. As to quaternary structure, homodimer.

The protein resides in the cytoplasm. It carries out the reaction glycolate + NADP(+) = glyoxylate + NADPH + H(+). The catalysed reaction is (R)-glycerate + NAD(+) = 3-hydroxypyruvate + NADH + H(+). The enzyme catalyses (R)-glycerate + NADP(+) = 3-hydroxypyruvate + NADPH + H(+). Its function is as follows. Catalyzes the NADPH-dependent reduction of glyoxylate and hydroxypyruvate into glycolate and glycerate, respectively. This Salmonella agona (strain SL483) protein is Glyoxylate/hydroxypyruvate reductase B.